We begin with the raw amino-acid sequence, 362 residues long: 3-isopropylmalate dehydrogenase (362 aa).

R97, R107, R135, and D225 together coordinate substrate. Mg(2+) contacts are provided by D225, D249, and D253. NAD(+) is bound at residue 283-295 (GSAPDIAHKNLAN).

The protein belongs to the isocitrate and isopropylmalate dehydrogenases family. LeuB type 1 subfamily. As to quaternary structure, homodimer. It depends on Mg(2+) as a cofactor. Requires Mn(2+) as cofactor.

It is found in the cytoplasm. The catalysed reaction is (2R,3S)-3-isopropylmalate + NAD(+) = 4-methyl-2-oxopentanoate + CO2 + NADH. Its pathway is amino-acid biosynthesis; L-leucine biosynthesis; L-leucine from 3-methyl-2-oxobutanoate: step 3/4. Catalyzes the oxidation of 3-carboxy-2-hydroxy-4-methylpentanoate (3-isopropylmalate) to 3-carboxy-4-methyl-2-oxopentanoate. The product decarboxylates to 4-methyl-2 oxopentanoate. In Prochlorococcus marinus (strain SARG / CCMP1375 / SS120), this protein is 3-isopropylmalate dehydrogenase.